Here is a 501-residue protein sequence, read N- to C-terminus: Lysine--tRNA ligase (501 aa).

E402 and E409 together coordinate Mg(2+).

The protein belongs to the class-II aminoacyl-tRNA synthetase family. In terms of assembly, homodimer. Mg(2+) is required as a cofactor.

Its subcellular location is the cytoplasm. It catalyses the reaction tRNA(Lys) + L-lysine + ATP = L-lysyl-tRNA(Lys) + AMP + diphosphate. The chain is Lysine--tRNA ligase from Helicobacter pylori (strain Shi470).